A 60-amino-acid polypeptide reads, in one-letter code: Putative mercuric resistance protein (60 aa).

This is Putative mercuric resistance protein from Shigella flexneri.